Reading from the N-terminus, the 235-residue chain is 2-C-methyl-D-erythritol 4-phosphate cytidylyltransferase (235 aa).

This sequence belongs to the IspD/TarI cytidylyltransferase family. IspD subfamily.

The enzyme catalyses 2-C-methyl-D-erythritol 4-phosphate + CTP + H(+) = 4-CDP-2-C-methyl-D-erythritol + diphosphate. Its pathway is isoprenoid biosynthesis; isopentenyl diphosphate biosynthesis via DXP pathway; isopentenyl diphosphate from 1-deoxy-D-xylulose 5-phosphate: step 2/6. In terms of biological role, catalyzes the formation of 4-diphosphocytidyl-2-C-methyl-D-erythritol from CTP and 2-C-methyl-D-erythritol 4-phosphate (MEP). This chain is 2-C-methyl-D-erythritol 4-phosphate cytidylyltransferase, found in Pseudomonas entomophila (strain L48).